A 151-amino-acid chain; its full sequence is Ubiquitin-like protein 4A-B (151 aa).

In terms of domain architecture, Ubiquitin-like spans 1–76 (MILTIKPLQG…LNLVVRPAGE (76 aa)).

Component of the BAT3 complex.

It localises to the cytoplasm. It is found in the cytosol. Functionally, component of the BAT3 complex, a multiprotein complex involved in the post-translational delivery of tail-anchored (TA) membrane proteins to the endoplasmic reticulum membrane. TA membrane proteins, also named type II transmembrane proteins, contain a single C-terminal transmembrane region. This is Ubiquitin-like protein 4A-B (ubl4ab) from Salmo salar (Atlantic salmon).